The chain runs to 917 residues: Outer kinetochore KNL1 complex subunit SPC105 (917 aa).

Positions 1–17 (MNVDERSRIGGREKDAG) are enriched in basic and acidic residues. Positions 1–38 (MNVDERSRIGGREKDAGPGKGILKQNQSSQMTSSFLEN) are disordered. Positions 24-36 (KQNQSSQMTSSFL) are enriched in polar residues. S77 carries the post-translational modification Phosphoserine. Disordered regions lie at residues 93-172 (QNNE…MEMT), 235-282 (TEYE…QPME), and 324-343 (HHID…KRRK). Positions 106–126 (STNSPTKISSQEEPLVTSTQI) are enriched in polar residues. Basic and acidic residues predominate over residues 127–137 (DDARTEEKTAA). An MELT motif is present at residues 146 to 149 (MELT). T149 is subject to Phosphothreonine; by MPS1. Residues 156–170 (PDSNKASQHDPTSME) show a composition bias toward polar residues. The tract at residues 165-183 (DPTSMEMTEVFPRSIRQKN) is interacts with the BUB1-BUB3 complex. 2 short sequence motifs (MELT; degenerate) span residues 169-172 (MEMT) and 232-235 (IDLT). T172 and T235 each carry phosphothreonine; by MPS1. Polar residues predominate over residues 245 to 257 (NSVSRSTGKSSDY). Composition is skewed to basic and acidic residues over residues 258–273 (SVER…KSEN) and 324–335 (HHIDESPSEKHA). Phosphothreonine is present on T356. S380 carries the phosphoserine modification. The segment at 397-427 (DVFTIEPGTEDTGMQTATDDEEDGENVDDNG) is disordered. Acidic residues predominate over residues 414-424 (TDDEEDGENVD). A required for interaction with KRE28 region spans residues 507-638 (PILEVEAFRC…IKEEIRSLKN (132 aa)). Residues 591 to 628 (ELILAENLNTLKREYEKLNEEVEKVNSIRGKIRKLNEA) adopt a coiled-coil conformation.

In terms of assembly, component of the KNL1/SPC105 complex composed of SPC105 and KRE28. Part of the outer kinetochore KMN network that includes the KNL1, MIS12 and NDC80 complexes. Interacts (via phosphorylated MELT motifs) with BUB1 and BUB3 in the BUB1-BUB3 complex; the interaction is direct. Interacts with the MIS12 complex subunits MTW1 (via C-terminus) and NSL1 (via C-terminus). Interacts with the NDC80 complex subunits SPC24 and SPC25. Interacts with CNN1 (via N-terminus).

The protein localises to the nucleus. The protein resides in the chromosome. It is found in the centromere. It localises to the kinetochore. Acts as a component of the outer kinetochore KNL1 complex that serves as a docking point for spindle assembly checkpoint components and mediates microtubule-kinetochore interactions. Kinetochores, consisting of a centromere-associated inner segment and a microtubule-contacting outer segment, play a crucial role in chromosome segregation by mediating the physical connection between centromeric DNA and spindle microtubules. The outer kinetochore is made up of the ten-subunit KMN network, comprising the MIS12, NDC80 and KNL1 complexes, and auxiliary microtubule-associated components; together they connect the outer kinetochore with the inner kinetochore, bind microtubules, and mediate interactions with mitotic checkpoint proteins that delay anaphase until chromosomes are bioriented on the spindle. Recruits the BUB1-BUB3 complex to kinetochores when phosphorylated by MPS1, to support spindle assembly checkpoint signaling; the effect is reversed by protein phosphatase 1 (PP1). The KNL1 complex is required for kinetochore binding by the kMAPs (kinetochore-bound microtubule-associated proteins) BIM1, BIK1 and SLK19, and motors CIN8 and KAR3. This Saccharomyces cerevisiae (strain ATCC 204508 / S288c) (Baker's yeast) protein is Outer kinetochore KNL1 complex subunit SPC105 (SPC105).